A 174-amino-acid polypeptide reads, in one-letter code: Chorion class CB protein M5H4 (174 aa).

The first 20 residues, 1 to 20 (MTTIVVLICASALFVQLAFS), serve as a signal peptide directing secretion. The interval 21–71 (QCLGRDPVIGFGGAYGSGWGGYDAISPYDGLGYGVPYSAGFIGLSPSNLAA) is left arm. Residues 72 to 142 (SCGGALAVNS…GDGAIGIVSE (71 aa)) are central domain. The segment at 143–174 (APIVAPASIGYGQWPVNAGYKGIGPCGCGGLY) is right arm.

The protein belongs to the chorion protein family.

Its function is as follows. This protein is one of many from the eggshell of the silk moth. The polypeptide is Chorion class CB protein M5H4 (Bombyx mori (Silk moth)).